A 130-amino-acid chain; its full sequence is Glutamate-rich protein 4 (130 aa).

Over residues 91–104 (EEEEESSKEEEEDQ) the composition is skewed to acidic residues. The tract at residues 91-130 (EEEEESSKEEEEDQEPQRKQEEEHLEACPAPHPPDFEMMI) is disordered. Basic and acidic residues predominate over residues 105 to 116 (EPQRKQEEEHLE).

This chain is Glutamate-rich protein 4 (ERICH4), found in Homo sapiens (Human).